Here is a 963-residue protein sequence, read N- to C-terminus: Phosphofurin acidic cluster sorting protein 1 (963 aa).

Positions methionine 1 to glycine 22 are enriched in gly residues. 2 disordered regions span residues methionine 1–threonine 72 and valine 78–alanine 97. Alanine 2 carries the N-acetylalanine modification. A Phosphoserine modification is found at serine 28. Threonine 46 carries the phosphothreonine modification. The segment covering alanine 53–threonine 72 has biased composition (low complexity). The interval glutamate 168 to phenylalanine 175 is involved in binding to AP-1. Residue tyrosine 251 is modified to Phosphotyrosine. Residues glycine 262 to aspartate 273 show a composition bias toward basic and acidic residues. Disordered regions lie at residues glycine 262–glutamine 299 and asparagine 377–threonine 428. The span at asparagine 276–aspartate 293 shows a compositional bias: acidic residues. Positions histidine 353–asparagine 377 form a coiled coil. Serine 379 and serine 381 each carry phosphoserine. The span at methionine 406–threonine 428 shows a compositional bias: polar residues. Phosphoserine is present on residues serine 430 and serine 495. Disordered regions lie at residues proline 476–glutamine 542 and serine 760–serine 804. Over residues methionine 483–proline 496 the composition is skewed to polar residues. At threonine 504 the chain carries Phosphothreonine. Phosphoserine is present on residues serine 519, serine 528, serine 529, serine 531, and serine 534. Over residues serine 770 to serine 804 the composition is skewed to low complexity.

Belongs to the PACS family. Associates with AP-1 and AP-3 but not with AP-2 complexes. Interacts with FURIN. Forms a ternary complex with FURIN and AP-1. Interacts with NPHP1; the interaction is dependent of NPHP1 phosphorylation by CK2. Interacts with PKD2 (via acidic region). Interacts with SORL1. Interacts with WDR37. As to quaternary structure, (Microbial infection) Interacts with HIV-1 Nef. In terms of assembly, (Microbial infection) Interacts with Epstein-barr virus protein BBLF1.

The protein localises to the golgi apparatus. It is found in the trans-Golgi network. Its function is as follows. Coat protein that is involved in the localization of trans-Golgi network (TGN) membrane proteins that contain acidic cluster sorting motifs. Controls the endosome-to-Golgi trafficking of furin and mannose-6-phosphate receptor by connecting the acidic-cluster-containing cytoplasmic domain of these molecules with the adapter-protein complex-1 (AP-1) of endosomal clathrin-coated membrane pits. Involved in HIV-1 nef-mediated removal of MHC-I from the cell surface to the TGN. Required for normal ER Ca2+ handling in lymphocytes. Together with WDR37, it plays an essential role in lymphocyte development, quiescence and survival. Required for stabilizing peripheral lymphocyte populations. The sequence is that of Phosphofurin acidic cluster sorting protein 1 (PACS1) from Homo sapiens (Human).